Consider the following 429-residue polypeptide: Adenylosuccinate synthetase (429 aa).

Residues 12–18 (GDEGKGK) and 40–42 (GHT) contribute to the GTP site. Asp13 serves as the catalytic Proton acceptor. Mg(2+) is bound by residues Asp13 and Gly40. Residues 13–16 (DEGK), 38–41 (NAGH), Thr128, Arg142, Gln223, Thr238, and Arg302 each bind IMP. His41 functions as the Proton donor in the catalytic mechanism. 298–304 (TTTGRPR) contacts substrate. Residues Arg304, 330–332 (CID), and 412–414 (SVG) contribute to the GTP site.

It belongs to the adenylosuccinate synthetase family. As to quaternary structure, homodimer. Mg(2+) serves as cofactor.

The protein localises to the cytoplasm. It carries out the reaction IMP + L-aspartate + GTP = N(6)-(1,2-dicarboxyethyl)-AMP + GDP + phosphate + 2 H(+). The protein operates within purine metabolism; AMP biosynthesis via de novo pathway; AMP from IMP: step 1/2. Its function is as follows. Plays an important role in the de novo pathway of purine nucleotide biosynthesis. Catalyzes the first committed step in the biosynthesis of AMP from IMP. This chain is Adenylosuccinate synthetase, found in Streptococcus mutans serotype c (strain ATCC 700610 / UA159).